The chain runs to 688 residues: Probable glucan endo-1,3-beta-glucosidase btgC (688 aa).

Disordered regions lie at residues 1–49, 61–91, and 169–194; these read MSGP…MNGQ, DGRQGWGRSPEPSPSLLTGSSATPGMDNLGP, and QLTPGQSVSHLSSTNPSQRNLYDIPY. Over 1–307 the chain is Cytoplasmic; the sequence is MSGPNRTYSF…PKPGGGNKKR (307 aa). A compositionally biased stretch (polar residues) spans 175–188; the sequence is SVSHLSSTNPSQRN. The helical; Signal-anchor for type II membrane protein transmembrane segment at 308–328 threads the bilayer; the sequence is GWIVGAILAFIIIGAIVGGAV. The Extracellular segment spans residues 329 to 688; it reads GGTIGHRGNE…IPDCGGKTAT (360 aa). The tract at residues 334-363 is disordered; sequence HRGNEEPSSASSASSSSTQTATEDTSVNGD. Residues 341-355 are compositionally biased toward low complexity; sequence SSASSASSSSTQTAT. N408, N431, and N459 each carry an N-linked (GlcNAc...) asparagine glycan. Residue E491 is the Proton donor of the active site. The active-site Nucleophile is the E590. N-linked (GlcNAc...) asparagine glycosylation is found at N609 and N635.

This sequence belongs to the glycosyl hydrolase 17 family.

It localises to the cell membrane. The enzyme catalyses Hydrolysis of (1-&gt;3)-beta-D-glucosidic linkages in (1-&gt;3)-beta-D-glucans.. Functionally, glucanases play a role in cell expansion during growth, in cell-cell fusion during mating, and in spore release during sporulation. This enzyme may be involved in beta-glucan degradation. Active on laminarin and lichenan. In Aspergillus fumigatus (strain CBS 144.89 / FGSC A1163 / CEA10) (Neosartorya fumigata), this protein is Probable glucan endo-1,3-beta-glucosidase btgC (btgC).